We begin with the raw amino-acid sequence, 140 residues long: Large ribosomal subunit protein uL16 (140 aa).

It belongs to the universal ribosomal protein uL16 family. In terms of assembly, part of the 50S ribosomal subunit.

In terms of biological role, binds 23S rRNA and is also seen to make contacts with the A and possibly P site tRNAs. This is Large ribosomal subunit protein uL16 from Malacoplasma penetrans (strain HF-2) (Mycoplasma penetrans).